Here is a 456-residue protein sequence, read N- to C-terminus: Bifunctional protein GlmU (456 aa).

Positions 1 to 229 (MLNNAMSVVI…LSEVEGVNNR (229 aa)) are pyrophosphorylase. UDP-N-acetyl-alpha-D-glucosamine-binding positions include 11-14 (LAAG), Lys25, Gln76, 81-82 (GT), 103-105 (YGD), Gly140, Glu154, Asn169, and Asn227. Position 105 (Asp105) interacts with Mg(2+). Asn227 contributes to the Mg(2+) binding site. Positions 230–250 (LQLSRLERVYQSEQAEKLLLA) are linker. The tract at residues 251-456 (GVMLRDPARF…EGWRRPVKKK (206 aa)) is N-acetyltransferase. The UDP-N-acetyl-alpha-D-glucosamine site is built by Arg333 and Lys351. His363 serves as the catalytic Proton acceptor. UDP-N-acetyl-alpha-D-glucosamine-binding residues include Tyr366 and Asn377. Acetyl-CoA contacts are provided by residues Ala380, 386–387 (NY), Ser405, Ala423, and Arg440.

This sequence in the N-terminal section; belongs to the N-acetylglucosamine-1-phosphate uridyltransferase family. The protein in the C-terminal section; belongs to the transferase hexapeptide repeat family. As to quaternary structure, homotrimer. Mg(2+) serves as cofactor.

Its subcellular location is the cytoplasm. The catalysed reaction is alpha-D-glucosamine 1-phosphate + acetyl-CoA = N-acetyl-alpha-D-glucosamine 1-phosphate + CoA + H(+). The enzyme catalyses N-acetyl-alpha-D-glucosamine 1-phosphate + UTP + H(+) = UDP-N-acetyl-alpha-D-glucosamine + diphosphate. Its pathway is nucleotide-sugar biosynthesis; UDP-N-acetyl-alpha-D-glucosamine biosynthesis; N-acetyl-alpha-D-glucosamine 1-phosphate from alpha-D-glucosamine 6-phosphate (route II): step 2/2. It participates in nucleotide-sugar biosynthesis; UDP-N-acetyl-alpha-D-glucosamine biosynthesis; UDP-N-acetyl-alpha-D-glucosamine from N-acetyl-alpha-D-glucosamine 1-phosphate: step 1/1. The protein operates within bacterial outer membrane biogenesis; LPS lipid A biosynthesis. Its function is as follows. Catalyzes the last two sequential reactions in the de novo biosynthetic pathway for UDP-N-acetylglucosamine (UDP-GlcNAc). The C-terminal domain catalyzes the transfer of acetyl group from acetyl coenzyme A to glucosamine-1-phosphate (GlcN-1-P) to produce N-acetylglucosamine-1-phosphate (GlcNAc-1-P), which is converted into UDP-GlcNAc by the transfer of uridine 5-monophosphate (from uridine 5-triphosphate), a reaction catalyzed by the N-terminal domain. The protein is Bifunctional protein GlmU of Escherichia coli O6:K15:H31 (strain 536 / UPEC).